A 474-amino-acid chain; its full sequence is 3-isopropylmalate dehydratase large subunit (474 aa).

3 residues coordinate [4Fe-4S] cluster: Cys-353, Cys-414, and Cys-417.

It belongs to the aconitase/IPM isomerase family. LeuC type 1 subfamily. As to quaternary structure, heterodimer of LeuC and LeuD. Requires [4Fe-4S] cluster as cofactor.

It carries out the reaction (2R,3S)-3-isopropylmalate = (2S)-2-isopropylmalate. It functions in the pathway amino-acid biosynthesis; L-leucine biosynthesis; L-leucine from 3-methyl-2-oxobutanoate: step 2/4. In terms of biological role, catalyzes the isomerization between 2-isopropylmalate and 3-isopropylmalate, via the formation of 2-isopropylmaleate. The chain is 3-isopropylmalate dehydratase large subunit from Pseudomonas paraeruginosa (strain DSM 24068 / PA7) (Pseudomonas aeruginosa (strain PA7)).